Consider the following 351-residue polypeptide: Rhodopsin (351 aa).

The Extracellular portion of the chain corresponds to 1-36; that stretch reads MNGTEGPFFYIPMSNATGLVRSPYDYPQYYLVPPWG. N-linked (GlcNAc...) asparagine glycosylation is found at Asn2 and Asn15. Residues 37–61 traverse the membrane as a helical segment; the sequence is YACLAAYMFLLILTGFPVNFLTLYV. Over 62–73 the chain is Cytoplasmic; sequence TIEHKKLRSPLN. Residues 74–96 form a helical membrane-spanning segment; the sequence is YILLNLAVADLFMVIGGFTTTMW. Topologically, residues 97-110 are extracellular; that stretch reads TSLNGYFVFGRMGC. Cysteines 110 and 187 form a disulfide. Residues 111-133 form a helical membrane-spanning segment; it reads NIEGFFATLGGEIALWSLVVLSM. Positions 134-136 match the 'Ionic lock' involved in activated form stabilization motif; it reads ERW. The Cytoplasmic segment spans residues 134–152; that stretch reads ERWIVVCKPISNFRFGENH. Residues 153-173 form a helical membrane-spanning segment; sequence AVMGVAFSWFMAAACAVPPLV. Residues 174-202 lie on the Extracellular side of the membrane; it reads GWSRYIPEGMQCSCGIDYYTRAEGFNNES. A glycan (N-linked (GlcNAc...) asparagine) is linked at Asn200. Residues 203–224 form a helical membrane-spanning segment; the sequence is FVIYMFVVHFTCPLTIITFCYG. Residues 225–252 lie on the Cytoplasmic side of the membrane; that stretch reads RLVCTVKEAAAQQQESETTQRAEREVTR. The helical transmembrane segment at 253 to 274 threads the bilayer; sequence MVIIMFVAFLACWVPYASVAWY. Topologically, residues 275-286 are extracellular; that stretch reads IFTHQGSEFGPV. Residues 287–308 form a helical membrane-spanning segment; it reads FMTIPAFFAKSSAVYNPVIYIC. Lys296 is subject to N6-(retinylidene)lysine. The Cytoplasmic portion of the chain corresponds to 309 to 351; sequence LNKQFRHCMITTLCCGKNPFEEEEGSTTASKTEASSVCSVSPA. S-palmitoyl cysteine attachment occurs at residues Cys322 and Cys323. The interval 330–351 is disordered; that stretch reads EEEGSTTASKTEASSVCSVSPA. Residues 334–351 are compositionally biased toward polar residues; that stretch reads STTASKTEASSVCSVSPA.

Belongs to the G-protein coupled receptor 1 family. Opsin subfamily. Post-translationally, phosphorylated on some or all of the serine and threonine residues present in the C-terminal region. Contains one covalently linked retinal chromophore.

It localises to the membrane. The protein resides in the cell projection. It is found in the cilium. Its subcellular location is the photoreceptor outer segment. Photoreceptor required for image-forming vision at low light intensity. While most salt water fish species use retinal as chromophore, most freshwater fish use 3-dehydroretinal, or a mixture of retinal and 3-dehydroretinal. Light-induced isomerization of 11-cis to all-trans retinal triggers a conformational change that activates signaling via G-proteins. Subsequent receptor phosphorylation mediates displacement of the bound G-protein alpha subunit by arrestin and terminates signaling. This Sardina pilchardus (European pilchard) protein is Rhodopsin (rho).